The chain runs to 336 residues: Dihydroorotate dehydrogenase (quinone) (336 aa).

Residues 62–66 (AGLDK) and T86 each bind FMN. A substrate-binding site is contributed by K66. 111–115 (NRMGF) contacts substrate. Positions 139 and 172 each coordinate FMN. A substrate-binding site is contributed by N172. Residue S175 is the Nucleophile of the active site. N177 lines the substrate pocket. Residues K217 and T245 each coordinate FMN. 246–247 (NT) is a substrate binding site. Residues G268, G297, and 318-319 (YS) contribute to the FMN site.

Belongs to the dihydroorotate dehydrogenase family. Type 2 subfamily. As to quaternary structure, monomer. FMN is required as a cofactor.

It is found in the cell membrane. It catalyses the reaction (S)-dihydroorotate + a quinone = orotate + a quinol. The protein operates within pyrimidine metabolism; UMP biosynthesis via de novo pathway; orotate from (S)-dihydroorotate (quinone route): step 1/1. Functionally, catalyzes the conversion of dihydroorotate to orotate with quinone as electron acceptor. In Shigella flexneri serotype 5b (strain 8401), this protein is Dihydroorotate dehydrogenase (quinone).